We begin with the raw amino-acid sequence, 83 residues long: Sec-independent protein translocase protein TatA (83 aa).

A helical transmembrane segment spans residues 1–21 (MGSFSIWHWLIVLLIVVMVFG). Positions 44–83 (KDGGQSAAATDDKPAAPAGQVTNAQASDKTTIDVEARQKS) are disordered. Polar residues predominate over residues 63-72 (QVTNAQASDK). Over residues 73-83 (TTIDVEARQKS) the composition is skewed to basic and acidic residues.

Belongs to the TatA/E family. The Tat system comprises two distinct complexes: a TatABC complex, containing multiple copies of TatA, TatB and TatC subunits, and a separate TatA complex, containing only TatA subunits. Substrates initially bind to the TatABC complex, which probably triggers association of the separate TatA complex to form the active translocon.

It localises to the cell inner membrane. Functionally, part of the twin-arginine translocation (Tat) system that transports large folded proteins containing a characteristic twin-arginine motif in their signal peptide across membranes. TatA could form the protein-conducting channel of the Tat system. The protein is Sec-independent protein translocase protein TatA of Polaromonas sp. (strain JS666 / ATCC BAA-500).